The primary structure comprises 493 residues: Galactose-1-phosphate uridylyltransferase (493 aa).

The protein belongs to the galactose-1-phosphate uridylyltransferase type 2 family.

It localises to the cytoplasm. It carries out the reaction alpha-D-galactose 1-phosphate + UDP-alpha-D-glucose = alpha-D-glucose 1-phosphate + UDP-alpha-D-galactose. It participates in carbohydrate metabolism; galactose metabolism. The polypeptide is Galactose-1-phosphate uridylyltransferase (Lactococcus lactis subsp. cremoris (strain SK11)).